The primary structure comprises 117 residues: Protein Wnt-6 (117 aa).

Serine 1 carries the O-palmitoleoyl serine; by PORCN lipid modification. A disulfide bridge connects residues cysteine 83 and cysteine 98. N-linked (GlcNAc...) asparagine glycosylation occurs at asparagine 84.

It belongs to the Wnt family. In terms of processing, palmitoleoylation is required for efficient binding to frizzled receptors. Depalmitoleoylation leads to Wnt signaling pathway inhibition.

It is found in the secreted. Its subcellular location is the extracellular space. The protein localises to the extracellular matrix. Ligand for members of the frizzled family of seven transmembrane receptors. Probable developmental protein. May be a signaling molecule which affects the development of discrete regions of tissues. Is likely to signal over only few cell diameters. This chain is Protein Wnt-6 (WNT-6), found in Plethodon jordani (Red-cheeked salamander).